The following is a 212-amino-acid chain: Small ribosomal subunit protein uS2 (212 aa).

The disordered stretch occupies residues 190 to 212 (LSPDAPEDQPAPVSEFETKVKMV).

It belongs to the universal ribosomal protein uS2 family.

This is Small ribosomal subunit protein uS2 from Ignicoccus hospitalis (strain KIN4/I / DSM 18386 / JCM 14125).